Consider the following 404-residue polypeptide: Cysteine desulfurase IscS (404 aa).

Pyridoxal 5'-phosphate is bound by residues 75–76 (AT), Asn-155, Gln-183, and 203–205 (SSH). Lys-206 bears the N6-(pyridoxal phosphate)lysine mark. Thr-243 contributes to the pyridoxal 5'-phosphate binding site. The Cysteine persulfide intermediate role is filled by Cys-328. Cys-328 is a [2Fe-2S] cluster binding site.

Belongs to the class-V pyridoxal-phosphate-dependent aminotransferase family. NifS/IscS subfamily. As to quaternary structure, homodimer. Forms a heterotetramer with IscU, interacts with other sulfur acceptors. It depends on pyridoxal 5'-phosphate as a cofactor.

It is found in the cytoplasm. It carries out the reaction (sulfur carrier)-H + L-cysteine = (sulfur carrier)-SH + L-alanine. It functions in the pathway cofactor biosynthesis; iron-sulfur cluster biosynthesis. In terms of biological role, master enzyme that delivers sulfur to a number of partners involved in Fe-S cluster assembly, tRNA modification or cofactor biosynthesis. Catalyzes the removal of elemental sulfur atoms from cysteine to produce alanine. Functions as a sulfur delivery protein for Fe-S cluster synthesis onto IscU, an Fe-S scaffold assembly protein, as well as other S acceptor proteins. In Haemophilus influenzae (strain PittEE), this protein is Cysteine desulfurase IscS.